The following is a 922-amino-acid chain: Chaperone protein ClpC, chloroplastic (922 aa).

Residues 1–72 (MARVLAQSLS…RPGLDFHSKV (72 aa)) constitute a chloroplast transit peptide. Residues 92–234 (FERFTEKAIK…RTQVIRMVGE (143 aa)) enclose the Clp R domain. 2 repeat regions span residues 95–160 (FTEK…IGRG) and 170–234 (FTPR…MVGE). Residues 255-502 (LEEYGTNLTK…RVRLQHAQLP (248 aa)) are i. ATP is bound at residue 300-307 (GEPGVGKT). A UVR domain is found at 509-544 (DKEVRKIVKEKEEYVRNQDFEKAGELRDKEMDLKAQ). The tract at residues 569 to 760 (VTEVDIQHIV…LLIMTSNVGS (192 aa)) is II. 643-650 (GPTGVGKS) serves as a coordination point for ATP.

This sequence belongs to the ClpA/ClpB family. ClpC subfamily.

It is found in the plastid. The protein resides in the chloroplast. Its function is as follows. Molecular chaperone that may interact with a ClpP-like protease involved in degradation of denatured proteins in the chloroplast. The sequence is that of Chaperone protein ClpC, chloroplastic from Pisum sativum (Garden pea).